Here is a 626-residue protein sequence, read N- to C-terminus: UvrABC system protein C (626 aa).

One can recognise a GIY-YIG domain in the interval 20–97; sequence ECSGVYKMLD…IKKFQPKFNI (78 aa). The UVR domain occupies 207 to 242; that stretch reads RELQENLSKKMQELSSQMRFEEAAEIRDRIKALSYV.

This sequence belongs to the UvrC family. In terms of assembly, interacts with UvrB in an incision complex.

The protein localises to the cytoplasm. Functionally, the UvrABC repair system catalyzes the recognition and processing of DNA lesions. UvrC both incises the 5' and 3' sides of the lesion. The N-terminal half is responsible for the 3' incision and the C-terminal half is responsible for the 5' incision. The protein is UvrABC system protein C of Rickettsia typhi (strain ATCC VR-144 / Wilmington).